The sequence spans 251 residues: MTMEISHILEDLVYDNGVLPREAIEAAIVKHHQITPYLLKILEEAIDHVSDIIDDDCYQGHLYAMYLLAQFRETRALPLIIKLFSFEQDIPHAIAGDVLTEDLSRILASVCDDVALIQELIETPHVNPYVQAAAISSLVALVGVHKLSRETAIRYFGELLNYRLEKKPSFAWDSLVASICALYPKELFYPISKAFSAGLIDTSFISMEDVETIIHEESIDSCLKEVLSSTDLINDTLEEMEKWLERFPFES.

Belongs to the chlamydial CPn_0206/CT_203/TC_0475 family.

This is an uncharacterized protein from Chlamydia trachomatis serovar D (strain ATCC VR-885 / DSM 19411 / UW-3/Cx).